Reading from the N-terminus, the 270-residue chain is uncharacterized protein (270 aa).

Its function is as follows. Possibly involved in pGI2 replication mechanism. This is an uncharacterized protein from Bacillus thuringiensis.